A 260-amino-acid chain; its full sequence is Adenosylcobinamide-GDP ribazoletransferase (260 aa).

The next 7 membrane-spanning stretches (helical) occupy residues 42 to 62 (PLAG…ANAI), 64 to 84 (LPPL…TGAL), 117 to 137 (FAAL…MAII), 144 to 164 (YALL…LAFW), 192 to 212 (GLGL…VALI), 214 to 234 (ALVL…AKIG), and 240 to 260 (TLGA…VMAL).

It belongs to the CobS family. Mg(2+) serves as cofactor.

The protein resides in the cell inner membrane. It carries out the reaction alpha-ribazole + adenosylcob(III)inamide-GDP = adenosylcob(III)alamin + GMP + H(+). The catalysed reaction is alpha-ribazole 5'-phosphate + adenosylcob(III)inamide-GDP = adenosylcob(III)alamin 5'-phosphate + GMP + H(+). It participates in cofactor biosynthesis; adenosylcobalamin biosynthesis; adenosylcobalamin from cob(II)yrinate a,c-diamide: step 7/7. Its function is as follows. Joins adenosylcobinamide-GDP and alpha-ribazole to generate adenosylcobalamin (Ado-cobalamin). Also synthesizes adenosylcobalamin 5'-phosphate from adenosylcobinamide-GDP and alpha-ribazole 5'-phosphate. The polypeptide is Adenosylcobinamide-GDP ribazoletransferase (Brucella melitensis biotype 1 (strain ATCC 23456 / CCUG 17765 / NCTC 10094 / 16M)).